We begin with the raw amino-acid sequence, 629 residues long: tRNA uridine 5-carboxymethylaminomethyl modification enzyme MnmG (629 aa).

13 to 18 contributes to the FAD binding site; it reads GGGHAG. Residue 273-287 coordinates NAD(+); it reads GPRYCPSIEDKITRF.

This sequence belongs to the MnmG family. In terms of assembly, homodimer. Heterotetramer of two MnmE and two MnmG subunits. The cofactor is FAD.

The protein resides in the cytoplasm. NAD-binding protein involved in the addition of a carboxymethylaminomethyl (cmnm) group at the wobble position (U34) of certain tRNAs, forming tRNA-cmnm(5)s(2)U34. This chain is tRNA uridine 5-carboxymethylaminomethyl modification enzyme MnmG, found in Aeromonas salmonicida (strain A449).